A 237-amino-acid chain; its full sequence is 1-(5-phosphoribosyl)-5-[(5-phosphoribosylamino)methylideneamino] imidazole-4-carboxamide isomerase (237 aa).

Residue D8 is the Proton acceptor of the active site. The Proton donor role is filled by D129.

Belongs to the HisA/HisF family.

Its subcellular location is the cytoplasm. It carries out the reaction 1-(5-phospho-beta-D-ribosyl)-5-[(5-phospho-beta-D-ribosylamino)methylideneamino]imidazole-4-carboxamide = 5-[(5-phospho-1-deoxy-D-ribulos-1-ylimino)methylamino]-1-(5-phospho-beta-D-ribosyl)imidazole-4-carboxamide. Its pathway is amino-acid biosynthesis; L-histidine biosynthesis; L-histidine from 5-phospho-alpha-D-ribose 1-diphosphate: step 4/9. The chain is 1-(5-phosphoribosyl)-5-[(5-phosphoribosylamino)methylideneamino] imidazole-4-carboxamide isomerase from Roseiflexus castenholzii (strain DSM 13941 / HLO8).